The sequence spans 251 residues: Ubiquinone/menaquinone biosynthesis C-methyltransferase UbiE (251 aa).

S-adenosyl-L-methionine-binding positions include threonine 74, aspartate 95, and 123–124 (NA).

This sequence belongs to the class I-like SAM-binding methyltransferase superfamily. MenG/UbiE family.

The enzyme catalyses a 2-demethylmenaquinol + S-adenosyl-L-methionine = a menaquinol + S-adenosyl-L-homocysteine + H(+). It carries out the reaction a 2-methoxy-6-(all-trans-polyprenyl)benzene-1,4-diol + S-adenosyl-L-methionine = a 5-methoxy-2-methyl-3-(all-trans-polyprenyl)benzene-1,4-diol + S-adenosyl-L-homocysteine + H(+). It participates in quinol/quinone metabolism; menaquinone biosynthesis; menaquinol from 1,4-dihydroxy-2-naphthoate: step 2/2. Its pathway is cofactor biosynthesis; ubiquinone biosynthesis. Methyltransferase required for the conversion of demethylmenaquinol (DMKH2) to menaquinol (MKH2) and the conversion of 2-polyprenyl-6-methoxy-1,4-benzoquinol (DDMQH2) to 2-polyprenyl-3-methyl-6-methoxy-1,4-benzoquinol (DMQH2). The protein is Ubiquinone/menaquinone biosynthesis C-methyltransferase UbiE of Shewanella pealeana (strain ATCC 700345 / ANG-SQ1).